The following is a 185-amino-acid chain: Photosystem I assembly protein Ycf4 (185 aa).

The next 2 helical transmembrane spans lie at 24–44 and 66–86; these read YLIG…SISS and IIMG…WYLV.

This sequence belongs to the Ycf4 family.

Its subcellular location is the cellular thylakoid membrane. Its function is as follows. Seems to be required for the assembly of the photosystem I complex. The sequence is that of Photosystem I assembly protein Ycf4 from Prochlorococcus marinus (strain MIT 9515).